A 307-amino-acid chain; its full sequence is Small ribosomal subunit protein bS1 (307 aa).

S1 motif domains follow at residues 32–101 (GDTV…LSIR), 119–183 (DATV…LSHR), and 197–265 (GEVV…LSTK).

Belongs to the bacterial ribosomal protein bS1 family.

In terms of biological role, binds mRNA. This Synechococcus sp. (strain ATCC 27144 / PCC 6301 / SAUG 1402/1) (Anacystis nidulans) protein is Small ribosomal subunit protein bS1 (rpsA).